A 78-amino-acid chain; its full sequence is Antitoxin VapB2 (78 aa).

Positions 4-44 constitute a SpoVT-AbrB domain; the sequence is AKIFMNGQSQAVRLPKEFRFSVKEVSVIPLGKGIVLQPLPN.

The protein belongs to the VapB family. In terms of assembly, forms complexes with VapC2; probably VapC2(4):VapB2(2) in the absence of DNA, and VapC2(4):VapB2(4) in the presence of DNA. Crystallizes as heterodimers with stoichiometry VapC2(4):VapB2(4) in the presence of its probable promoter DNA. The heterodimers are in contact via alternative VapC-VapC and VapB-VapB interactions. This subunit contacts DNA.

Its function is as follows. Antitoxin component of a type II toxin-antitoxin (TA) system. Upon expression in E.coli or S.cerevisiae neutralizes the effect of cognate toxin VapC2, partially inhibits the RNase activity of VapC2. In Rickettsia felis (strain ATCC VR-1525 / URRWXCal2) (Rickettsia azadi), this protein is Antitoxin VapB2 (vapB2).